The primary structure comprises 446 residues: Glucarate dehydratase-related protein (446 aa).

Substrate is bound by residues His-31, Thr-104, Tyr-149, and Lys-204. Residue Lys-206 is the Proton acceptor of the active site. The Mg(2+) site is built by Asp-234, Glu-265, and Asn-288. 234–236 is a substrate binding site; that stretch reads DPN. Residues Asn-288, 338–340, His-367, and Arg-421 contribute to the substrate site; that span reads HSN. His-338 (proton acceptor) is an active-site residue.

Belongs to the mandelate racemase/muconate lactonizing enzyme family. GlucD subfamily. The cofactor is a divalent metal cation.

In terms of biological role, does not seem to have an in-vivo activity on glucarate or idarate. Its real substrate is unknown. The sequence is that of Glucarate dehydratase-related protein (gudX) from Escherichia coli (strain K12).